A 186-amino-acid polypeptide reads, in one-letter code: Superoxide dismutase [Cu-Zn] (186 aa).

A signal peptide spans 1-20; the sequence is MKKTVLALMFSCGMVASAFA. 3 residues coordinate Cu cation: histidine 79, histidine 81, and histidine 104. An intrachain disulfide couples cysteine 86 to cysteine 182. Zn(2+)-binding residues include histidine 104, histidine 113, histidine 122, and aspartate 125. Histidine 160 contributes to the Cu cation binding site.

Belongs to the Cu-Zn superoxide dismutase family. As to quaternary structure, homodimer. Requires Cu cation as cofactor. Zn(2+) is required as a cofactor.

Its subcellular location is the periplasm. It catalyses the reaction 2 superoxide + 2 H(+) = H2O2 + O2. Functionally, destroys radicals which are normally produced within the cells and which are toxic to biological systems. The polypeptide is Superoxide dismutase [Cu-Zn] (sodC) (Pasteurella multocida (strain Pm70)).